The following is a 106-amino-acid chain: UPF0145 protein VC_A0951 (106 aa).

The protein belongs to the UPF0145 family.

This is UPF0145 protein VC_A0951 from Vibrio cholerae serotype O1 (strain ATCC 39315 / El Tor Inaba N16961).